Here is a 275-residue protein sequence, read N- to C-terminus: Elongation factor Ts (275 aa).

Positions 76–79 are involved in Mg(2+) ion dislocation from EF-Tu; it reads TDFV.

This sequence belongs to the EF-Ts family.

Its subcellular location is the cytoplasm. In terms of biological role, associates with the EF-Tu.GDP complex and induces the exchange of GDP to GTP. It remains bound to the aminoacyl-tRNA.EF-Tu.GTP complex up to the GTP hydrolysis stage on the ribosome. The sequence is that of Elongation factor Ts from Corynebacterium kroppenstedtii (strain DSM 44385 / JCM 11950 / CIP 105744 / CCUG 35717).